Consider the following 307-residue polypeptide: Membrane protein insertase YidC 2 (307 aa).

Residues 1–23 (MKLTLNRILFSGLALSILLTLTG) form the signal peptide. A lipid anchor (N-palmitoyl cysteine) is attached at C24. C24 is lipidated: S-diacylglycerol cysteine. Transmembrane regions (helical) follow at residues 58 to 78 (LGYGLAIIIVTIIVRTLILPL), 135 to 155 (LGGIGCLPLLIQMPFFSAMYF), 179 to 199 (VLTAIIAALYFFQSWLSMMAV), 209 to 225 (TMMYTMPIMMIFMSFSL), and 231 to 251 (LYWLVGGFFSIIQQLITTYLL). A disordered region spans residues 263 to 307 (YAKNPPKAYQSTSSRKDVTPSQNMEQANLPKKIKSNRNAGKQRKR). Polar residues predominate over residues 271–288 (YQSTSSRKDVTPSQNMEQ). Positions 293-307 (KKIKSNRNAGKQRKR) are enriched in basic residues.

It belongs to the OXA1/ALB3/YidC family. Type 2 subfamily.

It is found in the cell membrane. Functionally, required for the insertion and/or proper folding and/or complex formation of integral membrane proteins into the membrane. Involved in integration of membrane proteins that insert both dependently and independently of the Sec translocase complex, as well as at least some lipoproteins. The protein is Membrane protein insertase YidC 2 of Streptococcus pyogenes serotype M1.